Consider the following 535-residue polypeptide: EH domain-containing protein 3 (535 aa).

The residue at position 1 (Met1) is an N-acetylmethionine. One can recognise a Dynamin-type G domain in the interval 55 to 286 (FDNKPMVLLV…DLFKDIQSLP (232 aa)). The tract at residues 65–72 (GQYSTGKT) is G1 motif. Position 65 to 72 (65 to 72 (GQYSTGKT)) interacts with ATP. Positions 91–92 (EP) are G2 motif. Residues 153–156 (DTPG) form a G3 motif region. Residues 198 to 227 (DEFSEVIKALKNHEDKMRVVLNKADQIETQ) are a coiled coil. Positions 219-222 (NKAD) are G4 motif. An ATP-binding site is contributed by Lys220. Position 243 (Ile243) is a region of interest, G5 motif. ATP is bound at residue Trp258. Lys315 is covalently cross-linked (Glycyl lysine isopeptide (Lys-Gly) (interchain with G-Cter in SUMO)). Phosphoserine occurs at positions 349 and 456. One can recognise an EH domain in the interval 444 to 532 (DKPMYDEIFY…AHLLPPSKRK (89 aa)). The 36-residue stretch at 476–511 (LPNSVLGKIWKLADIDKDGMLDDEEFALANHLIKVK) folds into the EF-hand domain. The Ca(2+) site is built by Asp489, Asp491, Asp493, Met495, and Glu500. Lys511 is covalently cross-linked (Glycyl lysine isopeptide (Lys-Gly) (interchain with G-Cter in SUMO)).

This sequence belongs to the TRAFAC class dynamin-like GTPase superfamily. Dynamin/Fzo/YdjA family. EHD subfamily. As to quaternary structure, homooligomer, and heterooligomer with EHD1, EHD2 and EHD4, ATP-binding is required for heterooligomerization. Interacts with PACSIN1. Interacts with PACSIN2. Interacts (via EH domain) with MICALL1. Interacts (via EH domain) with RAB11FIP2. Interacts with ANK2. Interacts with CACNA1GG and CACNA1H.

The protein localises to the recycling endosome membrane. It localises to the cell membrane. Its subcellular location is the cell projection. The protein resides in the cilium membrane. Its function is as follows. ATP- and membrane-binding protein that controls membrane reorganization/tubulation upon ATP hydrolysis. In vitro causes tubulation of endocytic membranes. Binding to phosphatidic acid induces its membrane tubulation activity. Plays a role in endocytic transport. Involved in early endosome to recycling endosome compartment (ERC), retrograde early endosome to Golgi, and endosome to plasma membrane (rapid recycling) protein transport. Involved in the regulation of Golgi maintenance and morphology. Involved in the recycling of internalized D1 dopamine receptor. Plays a role in cardiac protein trafficking probably implicating ANK2. Involved in the ventricular membrane targeting of SLC8A1 and CACNA1C and probably the atrial membrane localization of CACNA1GG and CACNA1H implicated in the regulation of atrial myocyte excitability and cardiac conduction. In conjunction with EHD4 may be involved in endocytic trafficking of KDR/VEGFR2 implicated in control of glomerular function. Involved in the rapid recycling of integrin beta-3 implicated in cell adhesion maintenance. Involved in the unidirectional retrograde dendritic transport of endocytosed BACE1 and in efficient sorting of BACE1 to axons implicating a function in neuronal APP processing. Plays a role in the formation of the ciliary vesicle, an early step in cilium biogenesis; possibly sharing redundant functions with Ehd1. The polypeptide is EH domain-containing protein 3 (Rattus norvegicus (Rat)).